Consider the following 432-residue polypeptide: Phosphomethylpyrimidine synthase (432 aa).

Substrate is bound by residues asparagine 66, methionine 95, tyrosine 124, histidine 163, 185-187, 226-229, and glutamate 265; these read SRG and DGLR. Histidine 269 serves as a coordination point for Zn(2+). A substrate-binding site is contributed by tyrosine 292. Histidine 333 serves as a coordination point for Zn(2+). 3 residues coordinate [4Fe-4S] cluster: cysteine 409, cysteine 412, and cysteine 416.

The protein belongs to the ThiC family. The cofactor is [4Fe-4S] cluster.

It carries out the reaction 5-amino-1-(5-phospho-beta-D-ribosyl)imidazole + S-adenosyl-L-methionine = 4-amino-2-methyl-5-(phosphooxymethyl)pyrimidine + CO + 5'-deoxyadenosine + formate + L-methionine + 3 H(+). It functions in the pathway cofactor biosynthesis; thiamine diphosphate biosynthesis. Functionally, catalyzes the synthesis of the hydroxymethylpyrimidine phosphate (HMP-P) moiety of thiamine from aminoimidazole ribotide (AIR) in a radical S-adenosyl-L-methionine (SAM)-dependent reaction. The sequence is that of Phosphomethylpyrimidine synthase from Caldanaerobacter subterraneus subsp. tengcongensis (strain DSM 15242 / JCM 11007 / NBRC 100824 / MB4) (Thermoanaerobacter tengcongensis).